Reading from the N-terminus, the 547-residue chain is Cytochrome P450 monooxygenase 128 (547 aa).

The chain crosses the membrane as a helical span at residues 9 to 25 (IPWAAGATLLAWAAYKI). Asparagine 336 and asparagine 438 each carry an N-linked (GlcNAc...) asparagine glycan. Residue cysteine 483 participates in heme binding.

This sequence belongs to the cytochrome P450 family. Requires heme as cofactor.

The protein resides in the membrane. Its pathway is secondary metabolite biosynthesis. In terms of biological role, cytochrome P450 monooxygenase that is able to use 7-ethoxycoumarin and testosterone as substrates for oxidation. This Postia placenta (strain ATCC 44394 / Madison 698-R) (Brown rot fungus) protein is Cytochrome P450 monooxygenase 128.